The chain runs to 793 residues: MLMLMLVAAVTMWLRPLVTAQPLCRARTVRTGKVFNVIQDVQGDRLYFRSTTTRLIKHPCKKNIALYLGKQVFFTTDNFETSLLPFTIPTSMQVGVPEVTSAHFTGSLLLLVVNHKVYTYDYESNSWNLSLGIKHPVTHVSGDNCCYTGSLFCVDVSNLVFAYFRGDQISQTYIYYSNTGGFSFWKYHYDRQAEIVGSLGGIFHLFSLSQVGMLVVDQGKGMFKYSDHPLNRSLGLSFDYNGTLDIVIAPGQKGILLLWFEKSLLFSRNAGQLVDTVRVKKGEQTLFTSIFEAQITIHNIAVNENELAVITREDNLYYGNLGIVPSSIIKFAHQHIWSEDAALMFRSSGILEILTPVRDTAFAAFDFQKCLLNIQAILMDPDLHVGRCNIEFLKGEFTYRMYTIDMHSQLELTALLIPQPGTSLIPLVMVSNPHSLGFQATFYESGYTSDGNTKYKLDIYLKQQQHWGRTDFNFTSSLKRATMSTLTVDIANKEISCVDIKPLSTLISVGCDLDKKIVIQNTVSACSKGVLDALALQDNYSFIIEKEFYDPGFQGRQSSKDLHVFYSYQQLGCPLLVYYDTPWKPVVELWKKDRFQEVVDAEYVLLEVNGQFSYSYSLTAKSAMCTSQPQNWTTMIKESGGPFFWNRENYVSCHDPNNDAPLRWPDVQYQILGGRTANQIVFSHNNGFYVFYISIVDPYYSYCQLETVFSIYVYGAFPVQLVSAGVVMVLLISSILGSVWLAYMIPRLLRTARGRRMTSFVAQLYGRCKTVCQFRASATARTGSKPMGRHRSS.

A signal peptide spans 1–20; that stretch reads MLMLMLVAAVTMWLRPLVTA. Topologically, residues 21–725 are extracellular; sequence QPLCRARTVR…AFPVQLVSAG (705 aa). 7 disulfides stabilise this stretch: Cys24/Cys370, Cys60/Cys146, Cys145/Cys153, Cys388/Cys497, Cys511/Cys703, Cys526/Cys573, and Cys625/Cys653. Residue Asn128 is glycosylated (N-linked (GlcNAc...) asparagine). Asn231, Asn241, Asn473, Asn539, and Asn631 each carry an N-linked (GlcNAc...) asparagine glycan. Residues 726-747 traverse the membrane as a helical segment; the sequence is VVMVLLISSILGSVWLAYMIPR. The Cytoplasmic portion of the chain corresponds to 748–793; sequence LLRTARGRRMTSFVAQLYGRCKTVCQFRASATARTGSKPMGRHRSS.

Belongs to the CATSPERD family. In terms of assembly, component of the CatSper complex or CatSpermasome composed of the core pore-forming members CATSPER1, CATSPER2, CATSPER3 and CATSPER4 as well as auxiliary members CATSPERB, CATSPERG, CATSPERD, CATSPERE, CATSPERZ, C2CD6/CATSPERT, TMEM249, TMEM262 and EFCAB9. HSPA1 may be an additional auxiliary complex member. The core complex members CATSPER1, CATSPER2, CATSPER3 and CATSPER4 form a heterotetrameric channel. The auxiliary CATSPERB, CATSPERG, CATSPERD and CATSPERE subunits form a pavilion-like structure over the pore which stabilizes the complex through interactions with CATSPER4, CATSPER3, CATSPER1 and CATSPER2 respectively. TMEM262/CATSPERH interacts with CATSPERB, further stabilizing the complex. C2CD6/CATSPERT interacts at least with CATSPERD and is required for targeting the CatSper complex in the flagellar membrane.

The protein resides in the cell projection. It localises to the cilium. It is found in the flagellum membrane. In terms of biological role, auxiliary component of the CatSper complex, a complex involved in sperm cell hyperactivation. Sperm cell hyperactivation is needed for sperm motility which is essential late in the preparation of sperm for fertilization. Required for CATSPER1 stability before intraflagellar transport and/or incorporation of the CatSper complex channel into the flagellar membrane. The chain is Cation channel sperm-associated auxiliary subunit delta from Macaca fascicularis (Crab-eating macaque).